Consider the following 81-residue polypeptide: Cytochrome c oxidase subunit NDUFA4 (81 aa).

The Mitochondrial matrix portion of the chain corresponds to Met-1–Ser-14. The residue at position 10 (Lys-10) is an N6-acetyllysine. A helical membrane pass occupies residues Leu-15 to Ala-37. Residues Leu-38 to Phe-81 are Mitochondrial intermembrane-facing. Ser-66 is subject to Phosphoserine.

It belongs to the complex IV NDUFA4 subunit family. Component of the cytochrome c oxidase (complex IV, CIV), a multisubunit enzyme composed of 14 subunits. The complex is composed of a catalytic core of 3 subunits MT-CO1, MT-CO2 and MT-CO3, encoded in the mitochondrial DNA, and 11 supernumerary subunits COX4I, COX5A, COX5B, COX6A, COX6B, COX6C, COX7A, COX7B, COX7C, COX8 and NDUFA4, which are encoded in the nuclear genome. The complex exists as a monomer or a dimer and forms supercomplexes (SCs) in the inner mitochondrial membrane with NADH-ubiquinone oxidoreductase (complex I, CI) and ubiquinol-cytochrome c oxidoreductase (cytochrome b-c1 complex, complex III, CIII), resulting in different assemblies (supercomplex SCI(1)III(2)IV(1) and megacomplex MCI(2)III(2)IV(2)). Interacts with RAB5IF. Interacts with FLVCR2; this interaction occurs in the absence of heme and is disrupted upon heme binding.

It is found in the mitochondrion inner membrane. Functionally, component of the cytochrome c oxidase, the last enzyme in the mitochondrial electron transport chain which drives oxidative phosphorylation. The respiratory chain contains 3 multisubunit complexes succinate dehydrogenase (complex II, CII), ubiquinol-cytochrome c oxidoreductase (cytochrome b-c1 complex, complex III, CIII) and cytochrome c oxidase (complex IV, CIV), that cooperate to transfer electrons derived from NADH and succinate to molecular oxygen, creating an electrochemical gradient over the inner membrane that drives transmembrane transport and the ATP synthase. Cytochrome c oxidase is the component of the respiratory chain that catalyzes the reduction of oxygen to water. Electrons originating from reduced cytochrome c in the intermembrane space (IMS) are transferred via the dinuclear copper A center (CU(A)) of subunit 2 and heme A of subunit 1 to the active site in subunit 1, a binuclear center (BNC) formed by heme A3 and copper B (CU(B)). The BNC reduces molecular oxygen to 2 water molecules unsing 4 electrons from cytochrome c in the IMS and 4 protons from the mitochondrial matrix. NDUFA4 is required for complex IV maintenance. The sequence is that of Cytochrome c oxidase subunit NDUFA4 (NDUFA4) from Macaca fascicularis (Crab-eating macaque).